Here is a 168-residue protein sequence, read N- to C-terminus: ATP synthase subunit b (168 aa).

A helical transmembrane segment spans residues 9–29 (LFNLSTFVFTIINLLVLYYIL).

The protein belongs to the ATPase B chain family. As to quaternary structure, F-type ATPases have 2 components, F(1) - the catalytic core - and F(0) - the membrane proton channel. F(1) has five subunits: alpha(3), beta(3), gamma(1), delta(1), epsilon(1). F(0) has three main subunits: a(1), b(2) and c(10-14). The alpha and beta chains form an alternating ring which encloses part of the gamma chain. F(1) is attached to F(0) by a central stalk formed by the gamma and epsilon chains, while a peripheral stalk is formed by the delta and b chains.

The protein localises to the cell membrane. Its function is as follows. F(1)F(0) ATP synthase produces ATP from ADP in the presence of a proton or sodium gradient. F-type ATPases consist of two structural domains, F(1) containing the extramembraneous catalytic core and F(0) containing the membrane proton channel, linked together by a central stalk and a peripheral stalk. During catalysis, ATP synthesis in the catalytic domain of F(1) is coupled via a rotary mechanism of the central stalk subunits to proton translocation. In terms of biological role, component of the F(0) channel, it forms part of the peripheral stalk, linking F(1) to F(0). This Caldanaerobacter subterraneus subsp. tengcongensis (strain DSM 15242 / JCM 11007 / NBRC 100824 / MB4) (Thermoanaerobacter tengcongensis) protein is ATP synthase subunit b.